Consider the following 269-residue polypeptide: Protein MGF 360-15R (269 aa).

The protein belongs to the asfivirus MGF 360 family.

Plays a role in virus cell tropism, and may be required for efficient virus replication in macrophages. The chain is Protein MGF 360-15R from African swine fever virus (isolate Pig/Kenya/KEN-50/1950) (ASFV).